The following is a 518-amino-acid chain: Maturase K (518 aa).

The protein belongs to the intron maturase 2 family. MatK subfamily.

The protein localises to the plastid. Its subcellular location is the chloroplast. Its function is as follows. Usually encoded in the trnK tRNA gene intron. Probably assists in splicing its own and other chloroplast group II introns. The polypeptide is Maturase K (Syzygium cumini (Java plum)).